A 771-amino-acid chain; its full sequence is Topoisomerase 1-associated factor 2 (771 aa).

Disordered regions lie at residues 48 to 69 (NSIN…SIQS), 271 to 330 (EGVV…ISFD), and 346 to 367 (SDMH…KSSL). A compositionally biased stretch (low complexity) spans 51-69 (NNCSDPSPTSPSSQNSIQS). A compositionally biased stretch (polar residues) spans 275 to 294 (TQGSDNNKENIPSSTQQQKN). Positions 295–307 (DGAKRAESKDLDL) are enriched in basic and acidic residues. Residues 346–359 (SDMHIQYSNPSSGA) show a composition bias toward polar residues. Serine 397 carries the post-translational modification Phosphoserine. The residue at position 405 (threonine 405) is a Phosphothreonine. Residues 633-771 (NSKDKVEATS…KYVESDEDDQ (139 aa)) are disordered. The span at 640-652 (ATSNSTAQEQEQV) shows a compositional bias: polar residues. Low complexity predominate over residues 690–709 (SHSSPSSSSSMSLESSLDSS).

This sequence to yeast YJL076w. In terms of assembly, interacts with HPR1.

The protein resides in the nucleus. The chain is Topoisomerase 1-associated factor 2 (TOF2) from Saccharomyces cerevisiae (strain ATCC 204508 / S288c) (Baker's yeast).